Here is a 247-residue protein sequence, read N- to C-terminus: Putative trypsin-6 (247 aa).

The first 15 residues, Met1–Ala15, serve as a signal peptide directing secretion. The Peptidase S1 domain maps to Ile24–Ala244. Cys48 and Cys64 form a disulfide bridge. Catalysis depends on His63, which acts as the Charge relay system. Ca(2+)-binding residues include Glu75, Asn77, Val80, and Glu85. Asp107 acts as the Charge relay system in catalysis. Intrachain disulfides connect Cys139–Cys206, Cys171–Cys185, and Cys196–Cys220. Ser200 serves as the catalytic Charge relay system.

Belongs to the peptidase S1 family. Tryptase subfamily. Overexpressed in metastasing in non small cell lung tumors, leading to an enhanced cell migration.

The protein resides in the secreted. The catalysed reaction is Preferential cleavage: Arg-|-Xaa, Lys-|-Xaa.. In terms of biological role, may regulate cell migration. This is Putative trypsin-6 (PRSS3P2) from Homo sapiens (Human).